Here is a 288-residue protein sequence, read N- to C-terminus: Small ribosomal subunit protein uS2 (288 aa).

The tract at residues 228–288 is disordered; sequence RAGLSSDKDA…PAAEAPSTEA (61 aa). A compositionally biased stretch (low complexity) spans 257–288; that stretch reads QAAPAAEAAPAAEAQAAPAAEAPAAEAPSTEA.

It belongs to the universal ribosomal protein uS2 family.

The protein is Small ribosomal subunit protein uS2 of Rhodococcus opacus (strain B4).